A 690-amino-acid chain; its full sequence is Iron-regulated transcriptional activator AFT1 (690 aa).

The interval 1–21 (MEGFNPADIEHASPINSSDSH) is disordered. A Zn(2+)-binding site is contributed by D110. Residues K111, K115, I131, E132, R133, S134, D135, and K138 each contribute to the DNA site. Residue C143 participates in Zn(2+) binding. Positions 148-159 (RGRNARRKRKDK) are enriched in basic residues. The interval 148 to 205 (RGRNARRKRKDKPKGQDHEDEKSKINDDELEYASPSNATVTNGPQTSPDQTSSIKPKK) is disordered. Residues 160–174 (PKGQDHEDEKSKIND) are compositionally biased toward basic and acidic residues. The span at 181-201 (SPSNATVTNGPQTSPDQTSSI) shows a compositional bias: polar residues. Position 215 (C215) interacts with Zn(2+). DNA is bound at residue K226. The Zn(2+) site is built by H239 and H241. A DNA-binding site is contributed by N263. The CDC [2Fe-2S] cluster binding motif motif lies at 291-293 (CDC). Disordered regions lie at residues 335 to 357 (PCLP…PKSQ) and 612 to 655 (SSNE…VQKD). Over residues 339–351 (SVNNTGSINTNNV) the composition is skewed to polar residues. The segment covering 621–638 (HQYGPQQQPPQQLQYHQN) has biased composition (low complexity). The segment covering 639–649 (QPHDGHNHEQH) has biased composition (basic and acidic residues).

Homodimer. Dimerization decreases the DNA-binding activity.

The protein localises to the nucleus. Its activity is regulated as follows. Dimerization via the binding of Fe(2+) or a [2Fe-2S] cluster decreases the DNA-binding activity. In terms of biological role, transcription factor that activates the genes for FRE1, FRE2 and FET3 in response to iron deprivationand thereby plays a central role in iron homeostasis. Also required for the expression of LSO1. Recognizes the consensus iron-responsive element (Fe-RE) sequence 5'-CACCC-3' in the promoters of target genes. Iron could interact directly with AFT1 and inhibits its activity. In high iron condition, the presence of Fe(2+) or [2Fe-2S] cluster leads to dimerization, which in turn leads to a decrease in DNA affinity. The polypeptide is Iron-regulated transcriptional activator AFT1 (Saccharomyces cerevisiae (strain ATCC 204508 / S288c) (Baker's yeast)).